A 512-amino-acid polypeptide reads, in one-letter code: Maturase K (512 aa).

This sequence belongs to the intron maturase 2 family. MatK subfamily.

The protein localises to the plastid. It is found in the chloroplast. Functionally, usually encoded in the trnK tRNA gene intron. Probably assists in splicing its own and other chloroplast group II introns. This chain is Maturase K, found in Amorphophallus abyssinicus (Black arum).